The chain runs to 407 residues: Imidazolonepropionase (407 aa).

Residues His-68 and His-70 each contribute to the Fe(3+) site. Zn(2+) contacts are provided by His-68 and His-70. Residues Arg-77, Tyr-140, and His-173 each coordinate 4-imidazolone-5-propanoate. Residue Tyr-140 participates in N-formimidoyl-L-glutamate binding. Residue His-238 coordinates Fe(3+). Residue His-238 coordinates Zn(2+). A 4-imidazolone-5-propanoate-binding site is contributed by Gln-241. Asp-313 provides a ligand contact to Fe(3+). A Zn(2+)-binding site is contributed by Asp-313. Residues Asn-315 and Gly-317 each contribute to the N-formimidoyl-L-glutamate site. Position 318 (Thr-318) interacts with 4-imidazolone-5-propanoate.

The protein belongs to the metallo-dependent hydrolases superfamily. HutI family. Requires Zn(2+) as cofactor. It depends on Fe(3+) as a cofactor.

Its subcellular location is the cytoplasm. The enzyme catalyses 4-imidazolone-5-propanoate + H2O = N-formimidoyl-L-glutamate. It functions in the pathway amino-acid degradation; L-histidine degradation into L-glutamate; N-formimidoyl-L-glutamate from L-histidine: step 3/3. Functionally, catalyzes the hydrolytic cleavage of the carbon-nitrogen bond in imidazolone-5-propanoate to yield N-formimidoyl-L-glutamate. It is the third step in the universal histidine degradation pathway. The protein is Imidazolonepropionase of Burkholderia cenocepacia (strain ATCC BAA-245 / DSM 16553 / LMG 16656 / NCTC 13227 / J2315 / CF5610) (Burkholderia cepacia (strain J2315)).